A 499-amino-acid polypeptide reads, in one-letter code: Thioredoxin reductase 1, cytoplasmic (499 aa).

FAD-binding positions include 22–23 (SG), 42–43 (DF), 58–59 (TC), and 63–67 (GCIPK). A disulfide bond links Cys59 and Cys64. The residue at position 68 (Lys68) is an N6-succinyllysine. Position 131 is a phosphotyrosine (Tyr131). FAD-binding positions include 131 to 132 (YG) and Thr161. NADP(+) is bound by residues Arg166, 198–204 (ASYVALE), 221–222 (RS), Arg226, 226–228 (RGF), 292–293 (GR), and Lys315. FAD is bound at residue Tyr200. Residues Asp334, 341–343 (ELT), and His472 contribute to the FAD site. Glu341 contributes to the NADP(+) binding site. Catalysis depends on His472, which acts as the Proton acceptor. The cysteinyl-selenocysteine (Cys-Sec) cross-link spans 497 to 498 (CU). Sec498 is a non-standard amino acid (selenocysteine).

It belongs to the class-I pyridine nucleotide-disulfide oxidoreductase family. As to quaternary structure, homodimer. FAD is required as a cofactor. ISGylated.

Its subcellular location is the cytoplasm. The enzyme catalyses [thioredoxin]-dithiol + NADP(+) = [thioredoxin]-disulfide + NADPH + H(+). It carries out the reaction H2O2 + NADPH + H(+) = NADP(+) + 2 H2O. Reduces disulfideprotein thioredoxin (Trx) to its dithiol-containing form. Homodimeric flavoprotein involved in the regulation of cellular redox reactions, growth and differentiation. Contains a selenocysteine residue at the C-terminal active site that is essential for catalysis. Also has reductase activity on hydrogen peroxide (H2O2). This Bos taurus (Bovine) protein is Thioredoxin reductase 1, cytoplasmic (TXNRD1).